A 545-amino-acid polypeptide reads, in one-letter code: 1,3-beta-glucanosyltransferase ARB_07487 (545 aa).

An N-terminal signal peptide occupies residues 1 to 19 (MKFSSLAAATALVAGSVVA). N-linked (GlcNAc...) asparagine glycans are attached at residues Asn-51 and Asn-69. A disulfide bridge connects residues Cys-88 and Cys-117. (1,3-beta-D-glucosyl)n-binding positions include Tyr-106, 133-141 (SEPSTSIIR), Asn-174, and Glu-175. The active-site Proton donor is the Glu-175. N-linked (GlcNAc...) asparagine glycosylation occurs at Asn-179. (1,3-beta-D-glucosyl)n is bound by residues Asp-216 and Arg-221. 5 disulfides stabilise this stretch: Cys-230/Cys-363, Cys-248/Cys-279, Cys-384/Cys-437, Cys-393/Cys-464, and Cys-412/Cys-419. The Nucleophile role is filled by Glu-276. Tyr-308 serves as a coordination point for (1,3-beta-D-glucosyl)n. A disordered region spans residues 493-513 (GTGSVTSAPGSGGNKPDQGAA). Residue Ala-512 is the site of GPI-anchor amidated alanine attachment. Residues 513 to 545 (ASTISAPSVNLGIVKLGAYIFCAVLAGAGMILI) constitute a propeptide, removed in mature form.

This sequence belongs to the glycosyl hydrolase 72 family. The GPI-anchor is attached to the protein in the endoplasmic reticulum and serves to target the protein to the cell surface. There, the glucosamine-inositol phospholipid moiety is cleaved off and the GPI-modified mannoprotein is covalently attached via its lipidless GPI glycan remnant to the 1,6-beta-glucan of the outer cell wall layer.

Its subcellular location is the secreted. It localises to the cell membrane. The protein localises to the cell wall. Splits internally a 1,3-beta-glucan molecule and transfers the newly generated reducing end (the donor) to the non-reducing end of another 1,3-beta-glucan molecule (the acceptor) forming a 1,3-beta linkage, resulting in the elongation of 1,3-beta-glucan chains in the cell wall. Involved in cell wall biosynthesis and morphogenesis. This Arthroderma benhamiae (strain ATCC MYA-4681 / CBS 112371) (Trichophyton mentagrophytes) protein is 1,3-beta-glucanosyltransferase ARB_07487.